Reading from the N-terminus, the 232-residue chain is 5'-methylthioadenosine/S-adenosylhomocysteine nucleosidase (232 aa).

The active-site Proton acceptor is Glu12. Substrate-binding positions include Gly78, Val152, and 173-174; that span reads ME. The active-site Proton donor is Asp197.

Belongs to the PNP/UDP phosphorylase family. MtnN subfamily. As to quaternary structure, homodimer.

It carries out the reaction S-adenosyl-L-homocysteine + H2O = S-(5-deoxy-D-ribos-5-yl)-L-homocysteine + adenine. It catalyses the reaction S-methyl-5'-thioadenosine + H2O = 5-(methylsulfanyl)-D-ribose + adenine. The enzyme catalyses 5'-deoxyadenosine + H2O = 5-deoxy-D-ribose + adenine. It participates in amino-acid biosynthesis; L-methionine biosynthesis via salvage pathway; S-methyl-5-thio-alpha-D-ribose 1-phosphate from S-methyl-5'-thioadenosine (hydrolase route): step 1/2. In terms of biological role, catalyzes the irreversible cleavage of the glycosidic bond in both 5'-methylthioadenosine (MTA) and S-adenosylhomocysteine (SAH/AdoHcy) to adenine and the corresponding thioribose, 5'-methylthioribose and S-ribosylhomocysteine, respectively. Also cleaves 5'-deoxyadenosine, a toxic by-product of radical S-adenosylmethionine (SAM) enzymes, into 5-deoxyribose and adenine. Thus, is required for in vivo function of the radical SAM enzymes biotin synthase and lipoic acid synthase, that are inhibited by 5'-deoxyadenosine accumulation. The chain is 5'-methylthioadenosine/S-adenosylhomocysteine nucleosidase from Buchnera aphidicola subsp. Acyrthosiphon pisum (strain APS) (Acyrthosiphon pisum symbiotic bacterium).